The following is a 165-amino-acid chain: Large ribosomal subunit protein uL10 (165 aa).

Belongs to the universal ribosomal protein uL10 family. Part of the ribosomal stalk of the 50S ribosomal subunit. The N-terminus interacts with L11 and the large rRNA to form the base of the stalk. The C-terminus forms an elongated spine to which L12 dimers bind in a sequential fashion forming a multimeric L10(L12)X complex.

Forms part of the ribosomal stalk, playing a central role in the interaction of the ribosome with GTP-bound translation factors. This is Large ribosomal subunit protein uL10 from Pectobacterium atrosepticum (strain SCRI 1043 / ATCC BAA-672) (Erwinia carotovora subsp. atroseptica).